Reading from the N-terminus, the 294-residue chain is Acetaldehyde dehydrogenase (294 aa).

Position 11-14 (11-14 (SGNI)) interacts with NAD(+). Cys-126 serves as the catalytic Acyl-thioester intermediate. NAD(+)-binding positions include 157–165 (SAGPGTRAN) and Asn-269.

Belongs to the acetaldehyde dehydrogenase family.

The catalysed reaction is acetaldehyde + NAD(+) + CoA = acetyl-CoA + NADH + H(+). This Geobacillus stearothermophilus (Bacillus stearothermophilus) protein is Acetaldehyde dehydrogenase (pheF).